A 633-amino-acid polypeptide reads, in one-letter code: E3 ubiquitin-protein ligase ZSWIM2 (633 aa).

Residues 54 to 87 (FRVFLGNPHVCNCSTFPKGGELCKHICWVLLKKF) form an SWIM-type zinc finger. The RING-type 1 zinc finger occupies 147-198 (CSICQELLLEKKLPVTFCRFGCGNSIHIKCMKILANYQSTSNTSMLKCPLCR). A ZZ-type zinc finger spans residues 229-280 (HLGIPCNNCKQFPIEGKCYKCTECIEYHLCQECFDSCCHLSHTFTFREKRNQ). Cysteine 234, cysteine 237, cysteine 249, cysteine 252, cysteine 258, cysteine 261, histidine 267, and histidine 270 together coordinate Zn(2+). An RING-type 2 zinc finger spans residues 344 to 388 (CLLCLKAFHLGQHTRLLPCTHKFHRKCIDNWLFHKCNSCPIDGQV).

Dimer. Interacts with UBE2D1. Post-translationally, polyubiquitinated. Polyubiquitination is followed by degradation via the proteasome. In terms of tissue distribution, expression is testis-specific.

The enzyme catalyses S-ubiquitinyl-[E2 ubiquitin-conjugating enzyme]-L-cysteine + [acceptor protein]-L-lysine = [E2 ubiquitin-conjugating enzyme]-L-cysteine + N(6)-ubiquitinyl-[acceptor protein]-L-lysine.. E3 ubiquitin-protein ligase involved in the regulation of Fas-, DR3- and DR4-mediated apoptosis. Functions in conjunction with the UBE2D1, UBE2D3 and UBE2E1 E2 ubiquitin-conjugating enzymes. The polypeptide is E3 ubiquitin-protein ligase ZSWIM2 (Homo sapiens (Human)).